The chain runs to 510 residues: Histidine ammonia-lyase (510 aa).

The 5-imidazolinone (Ala-Gly) cross-link spans 144 to 146; it reads ASG. Serine 145 carries the 2,3-didehydroalanine (Ser) modification.

The protein belongs to the PAL/histidase family. Contains an active site 4-methylidene-imidazol-5-one (MIO), which is formed autocatalytically by cyclization and dehydration of residues Ala-Ser-Gly.

It localises to the cytoplasm. The enzyme catalyses L-histidine = trans-urocanate + NH4(+). It functions in the pathway amino-acid degradation; L-histidine degradation into L-glutamate; N-formimidoyl-L-glutamate from L-histidine: step 1/3. The chain is Histidine ammonia-lyase from Chromobacterium violaceum (strain ATCC 12472 / DSM 30191 / JCM 1249 / CCUG 213 / NBRC 12614 / NCIMB 9131 / NCTC 9757 / MK).